A 312-amino-acid chain; its full sequence is tRNA dimethylallyltransferase (312 aa).

Glycine 15 to serine 22 provides a ligand contact to ATP. Substrate is bound at residue threonine 17–serine 22. Residues aspartate 40 to glutamine 43 are interaction with substrate tRNA.

It belongs to the IPP transferase family. As to quaternary structure, monomer. It depends on Mg(2+) as a cofactor.

It catalyses the reaction adenosine(37) in tRNA + dimethylallyl diphosphate = N(6)-dimethylallyladenosine(37) in tRNA + diphosphate. Functionally, catalyzes the transfer of a dimethylallyl group onto the adenine at position 37 in tRNAs that read codons beginning with uridine, leading to the formation of N6-(dimethylallyl)adenosine (i(6)A). The protein is tRNA dimethylallyltransferase of Streptomyces griseus subsp. griseus (strain JCM 4626 / CBS 651.72 / NBRC 13350 / KCC S-0626 / ISP 5235).